The following is a 232-amino-acid chain: Small ribosomal subunit protein uS3 (232 aa).

Residues 39–107 form the KH type-2 domain; it reads VRQYLTKELK…PAQINIAEVR (69 aa).

This sequence belongs to the universal ribosomal protein uS3 family. Part of the 30S ribosomal subunit. Forms a tight complex with proteins S10 and S14.

Functionally, binds the lower part of the 30S subunit head. Binds mRNA in the 70S ribosome, positioning it for translation. This is Small ribosomal subunit protein uS3 from Aliivibrio salmonicida (strain LFI1238) (Vibrio salmonicida (strain LFI1238)).